Consider the following 438-residue polypeptide: ATP-dependent protease ATPase subunit HslU (438 aa).

ATP contacts are provided by residues I18, 60-65, D251, E316, and R388; that span reads GVGKTE.

The protein belongs to the ClpX chaperone family. HslU subfamily. As to quaternary structure, a double ring-shaped homohexamer of HslV is capped on each side by a ring-shaped HslU homohexamer. The assembly of the HslU/HslV complex is dependent on binding of ATP.

It localises to the cytoplasm. In terms of biological role, ATPase subunit of a proteasome-like degradation complex; this subunit has chaperone activity. The binding of ATP and its subsequent hydrolysis by HslU are essential for unfolding of protein substrates subsequently hydrolyzed by HslV. HslU recognizes the N-terminal part of its protein substrates and unfolds these before they are guided to HslV for hydrolysis. The protein is ATP-dependent protease ATPase subunit HslU of Jannaschia sp. (strain CCS1).